The following is a 1958-amino-acid chain: Echinoderm microtubule-associated protein-like 6 (1958 aa).

10 WD repeats span residues 59 to 100 (GHND…TVSI), 104 to 145 (VHTH…LLAS), 148 to 187 (GHSD…LTAK), 195 to 233 (GDLQ…RTIQ), 235 to 273 (AHSA…TKID), 280 to 321 (GYKG…LILQ), 323 to 362 (HCEG…LIAR), 364 to 403 (NMEE…EVVH), 406 to 445 (DRKE…KKIG), and 561 to 601 (GHSA…VSNG). The tract at residues 604–627 (ETTPQEGGADSYSEESDSDFSDVP) is disordered. Acidic residues predominate over residues 615–627 (YSEESDSDFSDVP). WD repeat units lie at residues 725-766 (GHDD…CLSL), 770-811 (HHQR…KIAT), 814-853 (GHKD…FTSK), 861-900 (GKLE…KTVK), 901-940 (AHDG…KTYA), 996-1035 (HMEG…RMLA), 1038-1077 (KLKK…DMLS), 1080-1120 (HRKE…RVGI), 1191-1230 (SDVT…QHAR), and 1236-1276 (GHSA…TQES). Residues 1322-1337 (KPHQQLKEVSMEERPP) show a composition bias toward basic and acidic residues. A disordered region spans residues 1322-1352 (KPHQQLKEVSMEERPPVSRAAPQPEKLQKNN). WD repeat units follow at residues 1412–1456 (EHTD…TLSM), 1460–1501 (FHTK…KVAS), 1504–1543 (GHLE…LLYK), 1553–1591 (AKMQ…RLVA), 1593–1638 (AHTG…CRAF), 1685–1724 (HMEG…LLNK), 1726–1767 (NLGH…GKKR), 1768–1807 (DRKS…SLNR), 1880–1919 (ADKA…KFAK), and 1925–1958 (GHSA…WRCL).

It belongs to the WD repeat EMAP family.

The protein localises to the cytoplasm. Its subcellular location is the cytoskeleton. Functionally, may modify the assembly dynamics of microtubules, such that microtubules are slightly longer, but more dynamic. The chain is Echinoderm microtubule-associated protein-like 6 (Eml6) from Mus musculus (Mouse).